The sequence spans 244 residues: 5-oxoprolinase subunit A (244 aa).

The protein belongs to the LamB/PxpA family. As to quaternary structure, forms a complex composed of PxpA, PxpB and PxpC.

The catalysed reaction is 5-oxo-L-proline + ATP + 2 H2O = L-glutamate + ADP + phosphate + H(+). Functionally, catalyzes the cleavage of 5-oxoproline to form L-glutamate coupled to the hydrolysis of ATP to ADP and inorganic phosphate. In Salmonella agona (strain SL483), this protein is 5-oxoprolinase subunit A.